A 458-amino-acid chain; its full sequence is Adenylosuccinate synthetase (458 aa).

GTP contacts are provided by residues 17–23 and 45–47; these read GDEGKGK and GHT. Catalysis depends on Asp-18, which acts as the Proton acceptor. Mg(2+)-binding residues include Asp-18 and Gly-45. Residues 18–21, 43–46, Thr-137, Arg-151, Gln-247, Thr-262, and Arg-330 each bind IMP; these read DEGK and NAGH. The Proton donor role is filled by His-46. 326–332 contributes to the substrate binding site; the sequence is VTTGRSR. GTP-binding positions include Arg-332, 358-360, and 440-442; these read KLD and STS.

It belongs to the adenylosuccinate synthetase family. Homodimer. The cofactor is Mg(2+).

The protein resides in the cytoplasm. The enzyme catalyses IMP + L-aspartate + GTP = N(6)-(1,2-dicarboxyethyl)-AMP + GDP + phosphate + 2 H(+). It functions in the pathway purine metabolism; AMP biosynthesis via de novo pathway; AMP from IMP: step 1/2. Its function is as follows. Plays an important role in the de novo pathway of purine nucleotide biosynthesis. Catalyzes the first committed step in the biosynthesis of AMP from IMP. In Verminephrobacter eiseniae (strain EF01-2), this protein is Adenylosuccinate synthetase.